Reading from the N-terminus, the 352-residue chain is UDP-N-acetylglucosamine--N-acetylmuramyl-(pentapeptide) pyrophosphoryl-undecaprenol N-acetylglucosamine transferase 2 (352 aa).

Residues 11-13 (SAG), arginine 164, serine 194, and glutamine 289 each bind UDP-N-acetyl-alpha-D-glucosamine.

The protein belongs to the glycosyltransferase 28 family. MurG subfamily.

It localises to the cell membrane. The enzyme catalyses di-trans,octa-cis-undecaprenyl diphospho-N-acetyl-alpha-D-muramoyl-L-alanyl-D-glutamyl-meso-2,6-diaminopimeloyl-D-alanyl-D-alanine + UDP-N-acetyl-alpha-D-glucosamine = di-trans,octa-cis-undecaprenyl diphospho-[N-acetyl-alpha-D-glucosaminyl-(1-&gt;4)]-N-acetyl-alpha-D-muramoyl-L-alanyl-D-glutamyl-meso-2,6-diaminopimeloyl-D-alanyl-D-alanine + UDP + H(+). It functions in the pathway cell wall biogenesis; peptidoglycan biosynthesis. In terms of biological role, cell wall formation. Catalyzes the transfer of a GlcNAc subunit on undecaprenyl-pyrophosphoryl-MurNAc-pentapeptide (lipid intermediate I) to form undecaprenyl-pyrophosphoryl-MurNAc-(pentapeptide)GlcNAc (lipid intermediate II). The protein is UDP-N-acetylglucosamine--N-acetylmuramyl-(pentapeptide) pyrophosphoryl-undecaprenol N-acetylglucosamine transferase 2 of Bacillus cereus (strain ATCC 14579 / DSM 31 / CCUG 7414 / JCM 2152 / NBRC 15305 / NCIMB 9373 / NCTC 2599 / NRRL B-3711).